The chain runs to 391 residues: Zinc finger protein ubi-d4 (391 aa).

Ala-2 is modified (N-acetylalanine). Glycyl lysine isopeptide (Lys-Gly) (interchain with G-Cter in SUMO2) cross-links involve residues Lys-10, Lys-99, Lys-107, and Lys-108. Disordered stretches follow at residues 79–147 and 165–199; these read WRKK…GEFP and DDLD…KLDA. Composition is skewed to basic and acidic residues over residues 100 to 110 and 126 to 140; these read PDTDQTLKKEG and DPLE…RVDD. The residue at position 142 (Ser-142) is a Phosphoserine. Positions 165–174 are enriched in acidic residues; that stretch reads DDLDDEDYEE. At Tyr-172 the chain carries Phosphotyrosine. Residue Thr-176 is modified to Phosphothreonine. Glycyl lysine isopeptide (Lys-Gly) (interchain with G-Cter in SUMO2) cross-links involve residues Lys-178 and Lys-196. Ser-200 bears the Phosphoserine mark. The segment at 209-232 adopts a C2H2-type zinc-finger fold; that stretch reads YACDICGKRYKNRPGLSYHYAHSH. Residues 233 to 266 are disordered; it reads LAEEEGEDKEDSRPPTPVSQRSEEQKSKKGPDGL. Ser-244 bears the Phosphoserine mark. Residues 253–263 are compositionally biased toward basic and acidic residues; that stretch reads RSEEQKSKKGP. 2 PHD-type zinc fingers span residues 270–330 and 327–377; these read NNYC…CKCC and CKCC…CLDL. Position 280 is a phosphoserine (Ser-280). Residue Lys-281 forms a Glycyl lysine isopeptide (Lys-Gly) (interchain with G-Cter in SUMO2) linkage.

The protein belongs to the requiem/DPF family. Interacts with the nucleosomes, in particular nucleosomes bearing histone H3 crotonylated at 'Lys-14' (H3K14cr) for which DPF2 has high affinity. Also interacts (via PHD-type zinc finger domains) with histone H3 butyrylated at 'Lys-14' (H3K14bu), histone H3 propionylated at 'Lys-14' (H3K14pr), and histone H3 acetylated at 'Lys-14' (H3K14ac). Interacts with histone H3 acetylated at 'Lys-9' (H3K9ac), histone H3 di-methylated at 'Lys-9' (H3K9me2), and histone H3 tri-methylated at 'Lys-9' (H3K9me3). Interacts with histone H4 acetylated at 'Lys-12' (H4K12ac). Interacts with histone H4 acetylated at 'Lys-16' (H4K16ac). Interacts with SWI/SNF complex components. Interacts with SMARCA2, SMARCA4, SMARCB1 and SMARCD1. Interacts with SMARCC1, SMARCC2 and ACTL6A. Interacts with RUNX1. In embryo, highest levels are seen in brain, eyes, thymus and olfactory epithelium in nose, whereas several other tissues, including the musculoskeletal system, show moderate expression. In adult, higher expression in testis, medium in thymus and spleen, lower in certain parts of the brain as the hippocampus. No expression in adult heart, lung, liver, duodenum and kidney.

It is found in the nucleus. It localises to the cytoplasm. In terms of biological role, plays an active role in transcriptional regulation by binding modified histones H3 and H4. Is a negative regulator of myeloid differentiation of hematopoietic progenitor cells. Might also have a role in the development and maturation of lymphoid cells. Involved in the regulation of non-canonical NF-kappa-B pathway. The sequence is that of Zinc finger protein ubi-d4 (Dpf2) from Mus musculus (Mouse).